The primary structure comprises 168 residues: Peptide deformylase (168 aa).

Fe cation-binding residues include Cys-92 and His-134. Residue Glu-135 is part of the active site. Residue His-138 coordinates Fe cation.

This sequence belongs to the polypeptide deformylase family. It depends on Fe(2+) as a cofactor.

It catalyses the reaction N-terminal N-formyl-L-methionyl-[peptide] + H2O = N-terminal L-methionyl-[peptide] + formate. In terms of biological role, removes the formyl group from the N-terminal Met of newly synthesized proteins. Requires at least a dipeptide for an efficient rate of reaction. N-terminal L-methionine is a prerequisite for activity but the enzyme has broad specificity at other positions. In Teredinibacter turnerae (strain ATCC 39867 / T7901), this protein is Peptide deformylase.